The chain runs to 190 residues: uncharacterized protein (190 aa).

Over 1–55 (MSRLRRFNRKILSLSSDYTHDGESDQEDVSILPLDTEEQEELIQKFETNAHITNK) the chain is Cytoplasmic. Residues 56–76 (LYINLLSILYLLYGGLLMILV) form a helical membrane-spanning segment. Residues 77–80 (RKSR) lie on the Extracellular side of the membrane. A helical membrane pass occupies residues 81–101 (GYIKLALLAGANSLICSCITL). Topologically, residues 102-123 (RYDIVNDYLLFKKFKLRVSNFS) are cytoplasmic. A helical membrane pass occupies residues 124 to 144 (INIINIILLVLMAWISFNHVV). The Extracellular segment spans residues 145–149 (EDKKT). The helical transmembrane segment at 150-170 (VLCLQVPMFLFWVAVLVKRWA) threads the bilayer. Topologically, residues 171-190 (RNIEDEIADLRCLKYKYKNA) are cytoplasmic.

It is found in the membrane. This is an uncharacterized protein from Saccharomyces cerevisiae (strain ATCC 204508 / S288c) (Baker's yeast).